A 415-amino-acid polypeptide reads, in one-letter code: ATP-dependent RNA helicase RhlB (415 aa).

The Q motif signature appears at Q9–A37. The Helicase ATP-binding domain occupies L40 to I218. Residue A53–T60 coordinates ATP. Residues D164 to D167 carry the DEAD box motif. Positions D241 to L389 constitute a Helicase C-terminal domain.

It belongs to the DEAD box helicase family. RhlB subfamily. Component of the RNA degradosome, which is a multiprotein complex involved in RNA processing and mRNA degradation.

The protein resides in the cytoplasm. It catalyses the reaction ATP + H2O = ADP + phosphate + H(+). Functionally, DEAD-box RNA helicase involved in RNA degradation. Has RNA-dependent ATPase activity and unwinds double-stranded RNA. This is ATP-dependent RNA helicase RhlB from Haemophilus influenzae (strain PittEE).